The following is a 463-amino-acid chain: L-seryl-tRNA(Sec) selenium transferase (463 aa).

N6-(pyridoxal phosphate)lysine is present on lysine 295.

Belongs to the SelA family. In terms of assembly, homodecamer; pentamer of dimers. Binds only one seryl-tRNA(Sec) per dimer. The cofactor is pyridoxal 5'-phosphate.

It is found in the cytoplasm. It catalyses the reaction L-seryl-tRNA(Sec) + selenophosphate + H(+) = L-selenocysteinyl-tRNA(Sec) + phosphate. The protein operates within aminoacyl-tRNA biosynthesis; selenocysteinyl-tRNA(Sec) biosynthesis; selenocysteinyl-tRNA(Sec) from L-seryl-tRNA(Sec) (bacterial route): step 1/1. Its function is as follows. Converts seryl-tRNA(Sec) to selenocysteinyl-tRNA(Sec) required for selenoprotein biosynthesis. The chain is L-seryl-tRNA(Sec) selenium transferase from Escherichia coli (strain K12 / MC4100 / BW2952).